The following is an 89-amino-acid chain: Large ribosomal subunit protein eL37A (89 aa).

Zn(2+)-binding residues include Cys-19, Cys-22, Cys-34, and Cys-37. The C4-type zinc-finger motif lies at 19 to 37 (CRRCGKRSFHIQKSTCACC).

It belongs to the eukaryotic ribosomal protein eL37 family. As to quaternary structure, component of the large ribosomal subunit (LSU). Mature yeast ribosomes consist of a small (40S) and a large (60S) subunit. The 40S small subunit contains 1 molecule of ribosomal RNA (18S rRNA) and at least 33 different proteins. The large 60S subunit contains 3 rRNA molecules (25S, 5.8S and 5S rRNA) and at least 46 different proteins. The cofactor is Zn(2+).

The protein localises to the cytoplasm. In terms of biological role, component of the ribosome, a large ribonucleoprotein complex responsible for the synthesis of proteins in the cell. The small ribosomal subunit (SSU) binds messenger RNAs (mRNAs) and translates the encoded message by selecting cognate aminoacyl-transfer RNA (tRNA) molecules. The large subunit (LSU) contains the ribosomal catalytic site termed the peptidyl transferase center (PTC), which catalyzes the formation of peptide bonds, thereby polymerizing the amino acids delivered by tRNAs into a polypeptide chain. The nascent polypeptides leave the ribosome through a tunnel in the LSU and interact with protein factors that function in enzymatic processing, targeting, and the membrane insertion of nascent chains at the exit of the ribosomal tunnel. The sequence is that of Large ribosomal subunit protein eL37A (rpl3703) from Schizosaccharomyces pombe (strain 972 / ATCC 24843) (Fission yeast).